A 1442-amino-acid chain; its full sequence is MDYDPAHAMSRGGSMRQTISRSVSKASRNMEDIFNTSSRRTKSVNEDEEALKWASIEKLPTYNRLRTSLMPELGEDDVYGNQILNKAVDVTKLDGEERQKFIDMVFKVAEQDNERILTKLRNRIDRVGIQLPTVEVRYDHLTVKADCYTGDRSLPSLLNAVRNMGEAALGMIGIRLAKKAQLTILKDVSGIVKPSRMTLLLGPPSSGKTTLLLALAGKLDKSLDVSGEVTYNGYRLNEFVPIKTSAYISQNDLHVGIMTVKETLDFSARCQGVGTRYDLLNELARREKDAGIFPEADVDLFMKASAAQGVKSSLITDYTLKILGLDICKDTIVGDDMMRGISGGQKKRVTTGEMIVGPTKTLFMDEISTGLDSSTTFQIVKCLQQIVHLTEATVLISLLQPAPETFDLFDDIILLSEGQIVYQGPRDHILEFFESFGFKCPERKGTADFLQEVTSKKDQEQYWVDPNRPYRYIPVSEFASSFKKFHVGSKLSNELSVPYDKSKSHKAALMFDKYSIKKTELLKSCWDKEWMLMKRNSFFYVFKTVQIIIIAAITSTLYLRTEMHTRNEIDANIYVGSLLFAMIVNMFNGLAEMAMTIQRLPVFYKQRDLLFHPPWTYTLPTFLLGIPISIFESTAWMVVTYYSIGYAPDAERFFKQFLIIFLIQQMAAGIFRFIASTCRTMTIANTGGVLVLLVVFLTGGFLLPRSEIPVWWRWAYWISPLSYAFNAITVNELFAPRWMNKMSGNSTTRLGTSVLNIWDVFDDKNWYWIGVGGLLGFTVIFNGFFTLALTYLDPLGKAQAILPKEEDEEAKGKAGSNKETEMESVSAKKGMVLPFTPLAMSFDDVKYFVDMPAEMREQGVQETRLQLLKGVTSAFRPGVLTALMGVSGAGKTTLMDVLAGRKTGGYIEGDVRVSGFPKKQETFARISGYCEQTDIHSPQVTVRESLIFSAFLRLAKEVSKEDKLMFVDQVMELVELVDLRDAIVGLPGVTGLSTEQRKRLTIAVELVANPSIIFMDEPTSGLDARAAAIVMRAVRNTVDTGRTVVCTIHQPSIDIFEAFDELLLMKRGGHVIYSGPLGRNSHKVVEYFESFPGVPKIPEKYNPATWMLEASSLAAELKLGVDFAELYKASALCQRNKALVQELSVPPQGATDLYFATQFSQNTWGQFKSCLWKQWWTYWRSPDYNLVRFIFTLATSLMIGSVFWQIGGKRSNVQDLTMVIGAIYAAVVFVGINNCSTVQPMVAVERTVFYREKAAGMYSAIPYAISQVTCELPYVLIQTTYYSLIIYSMVGFEWKASKFLWFIFINYFSFLYWTYYGMMTVSLTPNQQVASIFASAFYGIFNLFSGFFIPRPKIPKWWVWYYWICPVAWTIYGLITSQYGDVETPIALLGGAPGLTVKQYIKDQYGFESDYMGPVAGVLVGFTVFFAFIFAFCIKTLNFQSR.

The 274-residue stretch at 169–442 (LGMIGIRLAK…FESFGFKCPE (274 aa)) folds into the ABC transporter 1 domain. An ATP-binding site is contributed by 202–209 (GPPSSGKT). The region spanning 520–733 (ELLKSCWDKE…AFNAITVNEL (214 aa)) is the ABC transmembrane type-2 1 domain. The next 7 helical transmembrane spans lie at 538-558 (FFYV…STLY), 573-593 (IYVG…LAEM), 619-639 (LPTF…WMVV), 657-677 (FLII…IAST), 683-703 (IANT…GFLL), 714-734 (WAYW…NELF), and 769-789 (IGVG…TLAL). Residues 840–1092 (MSFDDVKYFV…KVVEYFESFP (253 aa)) enclose the ABC transporter 2 domain. 885 to 892 (GVSGAGKT) contributes to the ATP binding site. The 215-residue stretch at 1165–1379 (GQFKSCLWKQ…TIYGLITSQY (215 aa)) folds into the ABC transmembrane type-2 2 domain. 7 consecutive transmembrane segments (helical) span residues 1186-1206 (LVRF…FWQI), 1218-1238 (MVIG…CSTV), 1272-1292 (LPYV…MVGF), 1299-1319 (FLWF…YGMM), 1329-1349 (VASI…GFFI), 1357-1377 (WWVW…LITS), and 1414-1434 (PVAG…AFCI).

Belongs to the ABC transporter superfamily. ABCG family. PDR (TC 3.A.1.205) subfamily. As to expression, ubiquitous with higher levels in roots.

It is found in the membrane. Functionally, may be a general defense protein. In Arabidopsis thaliana (Mouse-ear cress), this protein is ABC transporter G family member 35 (ABCG35).